Consider the following 476-residue polypeptide: FAD-dependent monooxygenase prhF (476 aa).

Glutamate 41, glycine 55, and arginine 114 together coordinate FAD. Tyrosine 222 is a catalytic residue. FAD-binding residues include aspartate 314 and alanine 327. A glycan (N-linked (GlcNAc...) asparagine) is linked at asparagine 343. A helical transmembrane segment spans residues 447–467 (LGSTPIQMLTLLLPCLFYFMY). N-linked (GlcNAc...) asparagine glycosylation occurs at asparagine 471.

Belongs to the paxM FAD-dependent monooxygenase family. FAD serves as cofactor.

Its subcellular location is the membrane. The protein operates within secondary metabolite biosynthesis; terpenoid biosynthesis. In terms of biological role, FAD-dependent monooxygenase; part of the gene cluster that mediates the biosynthesis of paraherquonin, a meroterpenoid with a unique, highly congested hexacyclic molecular architecture. The first step of the pathway is the synthesis of 3,5-dimethylorsellinic acid (DMOA) by the polyketide synthase prhL. Synthesis of DMOA is followed by farnesylation by the prenyltransferase prhE, methylesterification by the methyl-transferase prhM, epoxidation of the prenyl chain by the flavin-dependent monooxygenase prhF, and cyclization of the farnesyl moiety by the terpene cyclase prhH, to yield the tetracyclic intermediate, protoaustinoid A. The short chain dehydrogenase prhI then oxidizes the C-3 alcohol group of the terpene cyclase product to transform protoaustinoid A into protoaustinoid B. The FAD-binding monooxygenase prhJ catalyzes the oxidation of protoaustinoid B into preaustinoid A which is further oxidized into preaustinoid A1 by FAD-binding monooxygenase phrK. Finally, prhA leads to berkeleydione via the berkeleyone B intermediate. PrhA is a multifunctional dioxygenase that first desaturates at C5-C6 to form berkeleyone B, followed by rearrangement of the A/B-ring to form the cycloheptadiene moiety in berkeleydione. Berkeleydione serves as the key intermediate for the biosynthesis of paraherquonin as well as many other meroterpenoids. The cytochrome P450 monooxygenases prhB, prhD, and prhN, as well as the isomerase prhC, are probably involved in the late stage of paraherquonin biosynthesis, after the production of berkeleydione. Especially prhC might be a multifunctional enzyme that catalyzes the D-ring expansion via intramolecular methoxy rearrangement, as well as the hydrolysis of the expanded D-ring. This chain is FAD-dependent monooxygenase prhF, found in Penicillium brasilianum.